The sequence spans 429 residues: Enolase (429 aa).

A (2R)-2-phosphoglycerate-binding site is contributed by Q167. E209 (proton donor) is an active-site residue. Mg(2+) contacts are provided by D246, E289, and D316. Positions 341, 370, 371, and 392 each coordinate (2R)-2-phosphoglycerate. The Proton acceptor role is filled by K341.

This sequence belongs to the enolase family. In terms of assembly, component of the RNA degradosome, a multiprotein complex involved in RNA processing and mRNA degradation. It depends on Mg(2+) as a cofactor.

The protein resides in the cytoplasm. The protein localises to the secreted. It is found in the cell surface. The catalysed reaction is (2R)-2-phosphoglycerate = phosphoenolpyruvate + H2O. The protein operates within carbohydrate degradation; glycolysis; pyruvate from D-glyceraldehyde 3-phosphate: step 4/5. Its function is as follows. Catalyzes the reversible conversion of 2-phosphoglycerate (2-PG) into phosphoenolpyruvate (PEP). It is essential for the degradation of carbohydrates via glycolysis. The chain is Enolase from Pseudomonas aeruginosa (strain LESB58).